We begin with the raw amino-acid sequence, 328 residues long: Methionyl-tRNA formyltransferase (328 aa).

110 to 113 (SLLP) contributes to the (6S)-5,6,7,8-tetrahydrofolate binding site.

The protein belongs to the Fmt family.

It carries out the reaction L-methionyl-tRNA(fMet) + (6R)-10-formyltetrahydrofolate = N-formyl-L-methionyl-tRNA(fMet) + (6S)-5,6,7,8-tetrahydrofolate + H(+). Attaches a formyl group to the free amino group of methionyl-tRNA(fMet). The formyl group appears to play a dual role in the initiator identity of N-formylmethionyl-tRNA by promoting its recognition by IF2 and preventing the misappropriation of this tRNA by the elongation apparatus. This chain is Methionyl-tRNA formyltransferase, found in Prochlorococcus marinus (strain AS9601).